We begin with the raw amino-acid sequence, 414 residues long: Lysocardiolipin acyltransferase 1 (414 aa).

2 consecutive transmembrane segments (helical) span residues 47–67 (FILTLFWGSFFGSIFMLSPFL) and 86–106 (ATWLTLPVALLETMFGVKVII). The short motif at 123–128 (HRTRMD) is the HXXXXD motif element. Position 221 is an N6-acetyllysine (Lys-221). 2 consecutive transmembrane segments (helical) span residues 340–360 (LRVLVVKLLSILYWTLFSPAM) and 362–382 (LLIYLYSLVKWYFIITIVIFV).

It belongs to the 1-acyl-sn-glycerol-3-phosphate acyltransferase family. Expressed at higher level in heart, kidney and pancreas than in brain, spleen, liver, lung, small intestine and placenta.

It localises to the endoplasmic reticulum membrane. The catalysed reaction is a 1-acyl-sn-glycero-3-phosphate + an acyl-CoA = a 1,2-diacyl-sn-glycero-3-phosphate + CoA. It catalyses the reaction a 1-acyl-sn-glycero-3-phospho-(1D-myo-inositol) + an acyl-CoA = a 1,2-diacyl-sn-glycero-3-phospho-(1D-myo-inositol) + CoA. The enzyme catalyses 1-acyl-sn-glycero-3-phospho-(1'-sn-glycerol) + an acyl-CoA = a 1,2-diacyl-sn-glycero-3-phospho-(1'-sn-glycerol) + CoA. It carries out the reaction 1-hexadecanoyl-sn-glycero-3-phosphate + (9Z)-octadecenoyl-CoA = 1-hexadecanoyl-2-(9Z-octadecenoyl)-sn-glycero-3-phosphate + CoA. The catalysed reaction is 1-(9Z-octadecenoyl)-sn-glycero-3-phosphate + (9Z)-octadecenoyl-CoA = 1,2-di-(9Z-octadecenoyl)-sn-glycero-3-phosphate + CoA. It catalyses the reaction 1-(9Z,12Z)-octadecadienoyl-sn-glycero-3-phosphate + (9Z)-octadecenoyl-CoA = 1-(9Z,12Z)-octadecadienoyl-2-(9Z)-octadecenoyl-sn-glycero-3-phosphate + CoA. The enzyme catalyses 1-(9Z,12Z,15Z)-octadecatrienoyl-sn-glycero-3-phosphate + (9Z)-octadecenoyl-CoA = 1-(9Z,12Z,15Z)-octadecatrienoyl-2-(9Z)-octadecenoyl-sn-glycero-3-phosphate + CoA. It carries out the reaction 1-(9Z-octadecenoyl)-sn-glycero-3-phosphate + hexadecanoyl-CoA = 1-(9Z)-octadecenoyl-2-hexadecanoyl-sn-glycero-3-phosphate + CoA. The catalysed reaction is 1-(9Z-octadecenoyl)-sn-glycero-3-phosphate + octadecanoyl-CoA = 1-(9Z-octadecenoyl)-2-octadecanoyl-sn-glycero-3-phosphate + CoA. It catalyses the reaction 1-acyl-sn-glycero-3-phospho-(1'-sn-glycerol) + (9Z)-octadecenoyl-CoA = 1-acyl-2-(9Z-octadecenoyl)-sn-glycero-3-phospho-(1'-sn-glycerol) + CoA. The enzyme catalyses a 1-acyl-sn-glycero-3-phospho-(1D-myo-inositol) + (9Z)-octadecenoyl-CoA = a 1-acyl-2-(9Z-octadecenoyl)-sn-glycero-3-phospho-(1D-myo-inositol) + CoA. It carries out the reaction 1-hexadecanoyl-sn-glycero-3-phospho-(1D-myo-inositol) + hexadecanoyl-CoA = 1,2-dihexadecanoyl-sn-glycero-3-phospho-(1D-myo-inositol) + CoA. The catalysed reaction is 1-hexadecanoyl-sn-glycero-3-phospho-(1D-myo-inositol) + octadecanoyl-CoA = 1-hexadecanoyl-2-octadecanoyl-sn-glycero-3-phospho-(1D-myo-inositol) + CoA. It catalyses the reaction 1-hexadecanoyl-sn-glycero-3-phospho-(1D-myo-inositol) + (9Z)-octadecenoyl-CoA = 1-hexadecanoyl-2-(9Z-octadecenoyl)-sn-glycero-3-phospho-(1D-myo-inositol) + CoA. The enzyme catalyses 1-hexadecanoyl-sn-glycero-3-phospho-(1D-myo-inositol) + (9Z,12Z)-octadecadienoyl-CoA = 1-hexadecanoyl-2-(9Z,12Z-octadecadienoyl)-sn-glycero-3-phospho-(1D-myo-inositol) + CoA. It carries out the reaction 1-hexadecanoyl-sn-glycero-3-phospho-(1D-myo-inositol) + (5Z,8Z,11Z,14Z)-eicosatetraenoyl-CoA = 1-hexadecanoyl-2-(5Z,8Z,11Z,14Z-eicosatetraenoyl)-sn-glycero-3-phospho-D-myo-inositol + CoA. The catalysed reaction is 1-hexadecanoyl-sn-glycero-3-phospho-(1'-sn-glycerol) + hexadecanoyl-CoA = 1,2-dihexadecanoyl-sn-glycero-3-phospho-(1'-sn-glycerol) + CoA. It catalyses the reaction 1-hexadecanoyl-sn-glycero-3-phospho-(1'-sn-glycerol) + octadecanoyl-CoA = 1-hexadecanoyl-2-octadecanoyl-sn-glycero-3-phospho-(1'-sn-glycerol) + CoA. The enzyme catalyses 1-hexadecanoyl-sn-glycero-3-phospho-(1'-sn-glycerol) + (9Z)-octadecenoyl-CoA = 1-hexadecanoyl-2-(9Z-octadecenoyl)-sn-glycero-3-phospho-(1'-sn-glycerol) + CoA. It carries out the reaction 1-hexadecanoyl-sn-glycero-3-phospho-(1'-sn-glycerol) + (9Z,12Z)-octadecadienoyl-CoA = 1-hexadecanoyl-2-(9Z,12Z-octadecadienoyl)-sn-glycero-3-phospho-(1'-sn-glycerol) + CoA. The catalysed reaction is 1-tetradecanoyl-sn-glycero-3-phospho-(1'-sn-glycerol) + (9Z)-octadecenoyl-CoA = 1-tetradecanoyl-2-(9Z-octadecenoyl)-sn-glycero-3-phospho-(1'-sn-glycerol) + CoA. It catalyses the reaction 1-octadecanoyl-sn-glycero-3-phospho-(1'-sn-glycerol) + (9Z)-octadecenoyl-CoA = 1-octadecanoyl-2-(9Z-octadecenoyl)-sn-glycero-3-phospho-(1'-sn-glycerol) + CoA. The enzyme catalyses 1-(9Z-octadecenoyl)-sn-glycero-3-phospho-(1'-sn-glycerol) + (9Z)-octadecenoyl-CoA = 1,2-di-(9Z-octadecenoyl)-sn-glycero-3-phospho-(1'-sn-glycerol) + CoA. It carries out the reaction 1-hexadecanoyl-sn-glycero-3-phospho-(1D-myo-inositol) + dodecanoyl-CoA = 1-hexadecanoyl-2-dodecanoyl-sn-glycero-3-phospho-(1D-myo-inositol) + CoA. The catalysed reaction is 1',3'-bis-[1-acyl-sn-glycero-3-phospho]-glycerol + (9Z)-octadecenoyl-CoA = 1'-[1-acyl-2-(9Z)-octadecenoyl-sn-glycero-3-phospho],3'-[1-acyl,2-hydroxy-sn-glycero-3-phospho]-glycerol + CoA. It catalyses the reaction 1'-[1,2-diacyl-sn-glycero-3-phospho],3'-[1-acyl-sn-glycero-3-phospho]-glycerol + (9Z)-octadecenoyl-CoA = 1'-[1,2-diacyl-sn-glycero-3-phospho],3'-[1-acyl,2-(9Z)-octadecenoyl-sn-glycero-3-phospho]-glycerol + CoA. The enzyme catalyses 1'-[1,2-diacyl-sn-glycero-3-phospho],3'-[1-acyl-sn-glycero-3-phospho]-glycerol + (9Z,12Z)-octadecadienoyl-CoA = 1'-[1,2-diacyl-sn-glycero-3-phospho],3'-[1-acyl,2-(9Z,12Z)-octadecadienoyl-sn-glycero-3-phospho]-glycerol + CoA. It carries out the reaction 1'-[1,2-diacyl-sn-glycero-3-phospho],3'-[1-acyl-sn-glycero-3-phospho]-glycerol + dodecanoyl-CoA = 1'-[1,2-diacyl-sn-glycero-3-phospho],3'-[1-acyl,2-dodecanoyl-sn-glycero-3-phospho]-glycerol + CoA. The catalysed reaction is 1',3'-bis-[1-acyl-sn-glycero-3-phospho]-glycerol + dodecanoyl-CoA = 1'-[1-acyl-2-dodecanoyl-sn-glycero-3-phospho],3'-[1-acyl,2-hydroxy-sn-glycero-3-phospho]-glycerol + CoA. It catalyses the reaction a 1-acyl-sn-glycero-3-phosphate + (9Z)-octadecenoyl-CoA = a 1-acyl-2-(9Z-octadecenoyl)-sn-glycero-3-phosphate + CoA. The enzyme catalyses 1',3'-bis-[1-acyl-sn-glycero-3-phospho]-glycerol + (9Z,12Z)-octadecadienoyl-CoA = 1'-[1-acyl-2-(9Z,12Z)-octadecadienoyl-sn-glycero-3-phospho],3'-[1-acyl,2-hydroxy-sn-glycero-3-phospho]-glycerol + CoA. It carries out the reaction 1',3'-bis-[1-acyl-sn-glycero-3-phospho]-glycerol + hexadecanoyl-CoA = 1'-[1-acyl-2-hexadecanoyl-sn-glycero-3-phospho],3'-[1-acyl,2-hydroxy-sn-glycero-3-phospho]-glycerol + CoA. The catalysed reaction is 1',3'-bis-[1-acyl-sn-glycero-3-phospho]-glycerol + octadecanoyl-CoA = 1'-[1-acyl-2-octadecanoyl-sn-glycero-3-phospho],3'-[1-acyl,2-hydroxy-sn-glycero-3-phospho]-glycerol + CoA. It catalyses the reaction 1'-[1,2-diacyl-sn-glycero-3-phospho],3'-[1-acyl-sn-glycero-3-phospho]-glycerol + octanoyl-CoA = 1'-[1,2-diacyl-sn-glycero-3-phospho],3'-[1-acyl,2-octanoyl-sn-glycero-3-phospho]-glycerol + CoA. The enzyme catalyses 1',3'-bis-[1-acyl-sn-glycero-3-phospho]-glycerol + octanoyl-CoA = 1'-[1-acyl-2-octanoyl-sn-glycero-3-phospho],3'-[1-acyl,2-hydroxy-sn-glycero-3-phospho]-glycerol + CoA. It carries out the reaction 1'-[1,2-diacyl-sn-glycero-3-phospho],3'-[1-acyl-sn-glycero-3-phospho]-glycerol + hexadecanoyl-CoA = 1'-[1,2-diacyl-sn-glycero-3-phospho],3'-[1-acyl,2-hexadecanoyl-sn-glycero-3-phospho]-glycerol + CoA. The catalysed reaction is 1'-[1,2-diacyl-sn-glycero-3-phospho],3'-[1-acyl-sn-glycero-3-phospho]-glycerol + (5Z,8Z,11Z,14Z)-eicosatetraenoyl-CoA = 1'-[1,2-diacyl-sn-glycero-3-phospho],3'-[1-acyl,2-(5Z,8Z,11Z,14Z)-eicosatetraenoyl-sn-glycero-3-phospho]-glycerol + CoA. It catalyses the reaction 1',3'-bis-[1-acyl-sn-glycero-3-phospho]-glycerol + (5Z,8Z,11Z,14Z)-eicosatetraenoyl-CoA = 1'-[1-acyl-2-(5Z,8Z,11Z,14Z)-eicosatetraenoyl-sn-glycero-3-phospho],3'-[1-acyl,2-hydroxy-sn-glycero-3-phospho]-glycerol + CoA. The enzyme catalyses a 1-acyl-sn-glycero-3-phospho-(1D-myo-inositol) + octadecanoyl-CoA = a 1-acyl-2-octadecanoyl-sn-glycero-3-phospho-(1D-myo-inositol) + CoA. It carries out the reaction a 2-acyl-sn-glycero-3-phospho-D-myo-inositol + octadecanoyl-CoA = 1-octadecanoyl-2-acyl-sn-glycero-3-phospho-1D-myo-inositol + CoA. It functions in the pathway phospholipid metabolism; CDP-diacylglycerol biosynthesis; CDP-diacylglycerol from sn-glycerol 3-phosphate: step 2/3. Its function is as follows. Exhibits acyl-CoA:lysocardiolipin acyltransferase (ALCAT) activity; catalyzes the reacylation of lyso-cardiolipin to cardiolipin (CL), a key step in CL remodeling. Recognizes both monolysocardiolipin and dilysocardiolipin as substrates with a preference for linoleoyl-CoA and oleoyl-CoA as acyl donors. Also exhibits 1-acyl-sn-glycerol-3-phosphate acyltransferase activity (AGPAT) activity; converts 1-acyl-sn-glycerol-3- phosphate (lysophosphatidic acid or LPA) into 1,2-diacyl-sn-glycerol-3- phosphate (phosphatidic acid or PA) by incorporating an acyl moiety at the sn-2 position of the glycerol backbone. Possesses both lysophosphatidylinositol acyltransferase (LPIAT) and lysophosphatidylglycerol acyltransferase (LPGAT) activities. Required for establishment of the hematopoietic and endothelial lineages. The polypeptide is Lysocardiolipin acyltransferase 1 (LCLAT1) (Homo sapiens (Human)).